Consider the following 352-residue polypeptide: Quinolinate synthase (352 aa).

His-48 and Ser-69 together coordinate iminosuccinate. Residue Cys-114 participates in [4Fe-4S] cluster binding. Iminosuccinate is bound by residues 140–142 (YAN) and Ser-157. A [4Fe-4S] cluster-binding site is contributed by Cys-201. Residues 227–229 (HPE) and Thr-244 contribute to the iminosuccinate site. Cys-298 contributes to the [4Fe-4S] cluster binding site.

This sequence belongs to the quinolinate synthase family. Type 1 subfamily. The cofactor is [4Fe-4S] cluster.

The protein localises to the cytoplasm. It carries out the reaction iminosuccinate + dihydroxyacetone phosphate = quinolinate + phosphate + 2 H2O + H(+). It functions in the pathway cofactor biosynthesis; NAD(+) biosynthesis; quinolinate from iminoaspartate: step 1/1. Its function is as follows. Catalyzes the condensation of iminoaspartate with dihydroxyacetone phosphate to form quinolinate. In Pseudomonas putida (strain ATCC 700007 / DSM 6899 / JCM 31910 / BCRC 17059 / LMG 24140 / F1), this protein is Quinolinate synthase.